Consider the following 318-residue polypeptide: Transaldolase (318 aa).

Catalysis depends on Lys-132, which acts as the Schiff-base intermediate with substrate.

It belongs to the transaldolase family. Type 1 subfamily. In terms of assembly, homodimer.

It localises to the cytoplasm. The enzyme catalyses D-sedoheptulose 7-phosphate + D-glyceraldehyde 3-phosphate = D-erythrose 4-phosphate + beta-D-fructose 6-phosphate. It functions in the pathway carbohydrate degradation; pentose phosphate pathway; D-glyceraldehyde 3-phosphate and beta-D-fructose 6-phosphate from D-ribose 5-phosphate and D-xylulose 5-phosphate (non-oxidative stage): step 2/3. In terms of biological role, transaldolase is important for the balance of metabolites in the pentose-phosphate pathway. This chain is Transaldolase, found in Shewanella baltica (strain OS223).